The chain runs to 315 residues: Transaldolase (315 aa).

The Schiff-base intermediate with substrate role is filled by Lys128.

Belongs to the transaldolase family. Type 1 subfamily. Homodimer.

It is found in the cytoplasm. The catalysed reaction is D-sedoheptulose 7-phosphate + D-glyceraldehyde 3-phosphate = D-erythrose 4-phosphate + beta-D-fructose 6-phosphate. It participates in carbohydrate degradation; pentose phosphate pathway; D-glyceraldehyde 3-phosphate and beta-D-fructose 6-phosphate from D-ribose 5-phosphate and D-xylulose 5-phosphate (non-oxidative stage): step 2/3. Functionally, transaldolase is important for the balance of metabolites in the pentose-phosphate pathway. The protein is Transaldolase of Opitutus terrae (strain DSM 11246 / JCM 15787 / PB90-1).